A 154-amino-acid polypeptide reads, in one-letter code: Endoribonuclease YbeY (154 aa).

Residues H116, H120, and H126 each contribute to the Zn(2+) site.

Belongs to the endoribonuclease YbeY family. The cofactor is Zn(2+).

Its subcellular location is the cytoplasm. In terms of biological role, single strand-specific metallo-endoribonuclease involved in late-stage 70S ribosome quality control and in maturation of the 3' terminus of the 16S rRNA. This chain is Endoribonuclease YbeY, found in Chromohalobacter salexigens (strain ATCC BAA-138 / DSM 3043 / CIP 106854 / NCIMB 13768 / 1H11).